The chain runs to 77 residues: Conotoxin Bt6.6 (77 aa).

An N-terminal signal peptide occupies residues 1-19; it reads MEKLTILLLVAAVLMSTQA. The propeptide occupies 20 to 38; it reads LIQSDGEKRQQAKINFLSX. Intrachain disulfides connect cysteine 51–cysteine 65, cysteine 58–cysteine 69, and cysteine 64–cysteine 74.

This sequence belongs to the conotoxin O2 superfamily. Expressed by the venom duct.

It localises to the secreted. The polypeptide is Conotoxin Bt6.6 (Conus betulinus (Beech cone)).